The following is a 1454-amino-acid chain: ABC transporter G family member 43 (1454 aa).

The interval 23-47 is disordered; the sequence is ARSLRDGDDPFRRSAAASRRDAGDD. Residues 25-44 are compositionally biased toward basic and acidic residues; the sequence is SLRDGDDPFRRSAAASRRDA. Asn163 is a glycosylation site (N-linked (GlcNAc...) asparagine). An ABC transporter 1 domain is found at 170-444; it reads EGLVSLFISS…FESAGFRCPE (275 aa). An ATP-binding site is contributed by 204–211; that stretch reads GPPSSGKS. Asn393 carries an N-linked (GlcNAc...) asparagine glycan. An ABC transmembrane type-2 1 domain is found at 524–735; the sequence is LKAVMSREWL…SNNALSVNEF (212 aa). The next 6 helical transmembrane spans lie at 540–560, 577–597, 613–630, 637–656, 659–679, and 684–704; these read FLFIFKAFQLFVLGFITMTLF, VGALTASLITIMFNGFGELQL, FFPAWTYGLANIILKVPL, LWIVLTYYVVGFAPAAGRFF, FLAYFWTHQMALALFRLLGAI, and VVANTFGMFVLLLIFLFGGFL. An N-linked (GlcNAc...) asparagine glycan is attached at Asn745. The chain crosses the membrane as a helical span at residues 775–795; sequence IGAMIGFMIVFNILYLCALTF. Residues 804–823 form a disordered region; that stretch reads TVVSDDDTKSELEAESNQEQ. N-linked (GlcNAc...) asparagine glycans are attached at residues Asn829 and Asn832. In terms of domain architecture, ABC transporter 2 spans 852–1104; the sequence is LSFNHMNYYV…ILVEYFEAIP (253 aa). 897-904 serves as a coordination point for ATP; sequence GVSGAGKT. Asn951 carries N-linked (GlcNAc...) asparagine glycosylation. One can recognise an ABC transmembrane type-2 2 domain in the interval 1178–1391; that stretch reads QCVANTWKQF…TIYGVIASQF (214 aa). Transmembrane regions (helical) follow at residues 1196 to 1216, 1236 to 1256, 1284 to 1304, 1314 to 1334, 1341 to 1361, 1372 to 1392, and 1423 to 1443; these read YNAMRYVMTLLYGLVFGTVFW, YAAVFFLGAANLLTLLPVVSV, FCYSAVQGVLYTILIYSMIGY, FLFFMIAAFAYFTLFSMMLVA, LAAVLVSFVLSSWNNFAGFII, WFYWANPVSWTIYGVIASQFA, and FLGYVVLAHFGYVIIFFFLFG.

Belongs to the ABC transporter superfamily. ABCG family. PDR (TC 3.A.1.205) subfamily. In terms of tissue distribution, specifically expressed in the vasculature of roots, stems, panicles, sheaths and leaves.

The protein resides in the cell membrane. In terms of biological role, ABC transporter modulating cadmium (Cd) import, thus controlling Cd(2+) accumulation to prevent phytotoxicity. Confers high tolerance to Cd in yeast. Prevents leaf bacteria proliferation, such as Xanthomonas oryzae pv. oryzicola (Xoc) RS105 and X.oryzae pv. oryzae (Xoo) PXO99, by triggering Cd accumulation, which in turn impairs bacterial virulence factors. In Oryza sativa subsp. japonica (Rice), this protein is ABC transporter G family member 43.